The chain runs to 148 residues: UPF0260 protein Sfri_1740 (148 aa).

The protein belongs to the UPF0260 family.

The chain is UPF0260 protein Sfri_1740 from Shewanella frigidimarina (strain NCIMB 400).